We begin with the raw amino-acid sequence, 828 residues long: Periplasmic nitrate reductase (828 aa).

The segment at residues 1–31 (MKLSRRSFMKANAVAAAAAAAGLSVPGVARA) is a signal peptide (tat-type signal). In terms of domain architecture, 4Fe-4S Mo/W bis-MGD-type spans 39 to 95 (IKWDKAPCRFCGTGCGVLVGTQQGRVVACQGDPDAPVNRGLNCIKGYFLPKIMYGKD). Residues C46, C49, C53, and C81 each contribute to the [4Fe-4S] cluster site. Residues K83, Q150, N175, C179, 212–219 (WGSNMAEM), 243–247 (STYQH), 262–264 (QSD), M372, Q376, N482, 508–509 (SD), K531, D558, and 718–727 (TGRVLEHWHT) contribute to the Mo-bis(molybdopterin guanine dinucleotide) site. F794 contributes to the substrate binding site. Mo-bis(molybdopterin guanine dinucleotide) is bound by residues N802 and K819.

This sequence belongs to the prokaryotic molybdopterin-containing oxidoreductase family. NasA/NapA/NarB subfamily. In terms of assembly, component of the periplasmic nitrate reductase NapAB complex composed of NapA and NapB. [4Fe-4S] cluster serves as cofactor. The cofactor is Mo-bis(molybdopterin guanine dinucleotide). Post-translationally, predicted to be exported by the Tat system. The position of the signal peptide cleavage has not been experimentally proven.

The protein localises to the periplasm. The enzyme catalyses 2 Fe(II)-[cytochrome] + nitrate + 2 H(+) = 2 Fe(III)-[cytochrome] + nitrite + H2O. In terms of biological role, catalytic subunit of the periplasmic nitrate reductase complex NapAB. Receives electrons from NapB and catalyzes the reduction of nitrate to nitrite. The chain is Periplasmic nitrate reductase from Escherichia coli O81 (strain ED1a).